The following is a 125-amino-acid chain: Large ribosomal subunit protein bL17 (125 aa).

The protein belongs to the bacterial ribosomal protein bL17 family. Part of the 50S ribosomal subunit. Contacts protein L32.

This is Large ribosomal subunit protein bL17 from Acinetobacter baumannii (strain AB0057).